The primary structure comprises 284 residues: Riboflavin transporter (284 aa).

EamA domains follow at residues 2-129 (VAAC…LIII) and 141-273 (LLPI…SLYL). The next 8 helical transmembrane spans lie at 26–46 (SVIIAFWQYVIALVLTLPLLV), 58–78 (FGLHVMRVALAAAGVQVWIYA), 82–102 (VPIWQVVALSMTSPFFVILCA), 115–135 (LLTTFTGFIGALIIIAPWSDS), 136–156 (YTVYSLLPILAAALWAGYSVM), 167–187 (ASISAYMLVLLTPINAALWLA), 195–215 (ITAPDVEIWSILIVIGAFTAL), and 247–267 (GWIVFAAAPSINFWPGAALII).

Belongs to the drug/metabolite transporter (DMT) superfamily. 10 TMS drug/metabolite exporter (DME) (TC 2.A.7.3) family.

The protein localises to the cell membrane. Functionally, transports riboflavin into the cell. This Brucella anthropi (strain ATCC 49188 / DSM 6882 / CCUG 24695 / JCM 21032 / LMG 3331 / NBRC 15819 / NCTC 12168 / Alc 37) (Ochrobactrum anthropi) protein is Riboflavin transporter.